Reading from the N-terminus, the 97-residue chain is Aspartyl/glutamyl-tRNA(Asn/Gln) amidotransferase subunit C (97 aa).

Residues alanine 74–glutamate 97 form a disordered region. Residues glutamine 85–glutamate 97 show a composition bias toward basic and acidic residues.

The protein belongs to the GatC family. In terms of assembly, heterotrimer of A, B and C subunits.

It carries out the reaction L-glutamyl-tRNA(Gln) + L-glutamine + ATP + H2O = L-glutaminyl-tRNA(Gln) + L-glutamate + ADP + phosphate + H(+). The catalysed reaction is L-aspartyl-tRNA(Asn) + L-glutamine + ATP + H2O = L-asparaginyl-tRNA(Asn) + L-glutamate + ADP + phosphate + 2 H(+). Functionally, allows the formation of correctly charged Asn-tRNA(Asn) or Gln-tRNA(Gln) through the transamidation of misacylated Asp-tRNA(Asn) or Glu-tRNA(Gln) in organisms which lack either or both of asparaginyl-tRNA or glutaminyl-tRNA synthetases. The reaction takes place in the presence of glutamine and ATP through an activated phospho-Asp-tRNA(Asn) or phospho-Glu-tRNA(Gln). The polypeptide is Aspartyl/glutamyl-tRNA(Asn/Gln) amidotransferase subunit C (Corynebacterium kroppenstedtii (strain DSM 44385 / JCM 11950 / CIP 105744 / CCUG 35717)).